Consider the following 790-residue polypeptide: LPS-assembly protein LptD (790 aa).

Positions 1 to 20 (MRMLRWLILSAFSVAGAVQA) are cleaved as a signal peptide.

It belongs to the LptD family. As to quaternary structure, component of the lipopolysaccharide transport and assembly complex. Interacts with LptE and LptA.

The protein resides in the cell outer membrane. Functionally, together with LptE, is involved in the assembly of lipopolysaccharide (LPS) at the surface of the outer membrane. The protein is LPS-assembly protein LptD of Bordetella parapertussis (strain 12822 / ATCC BAA-587 / NCTC 13253).